An 89-amino-acid chain; its full sequence is Small ribosomal subunit protein bS20 (89 aa).

This sequence belongs to the bacterial ribosomal protein bS20 family.

In terms of biological role, binds directly to 16S ribosomal RNA. The protein is Small ribosomal subunit protein bS20 of Hahella chejuensis (strain KCTC 2396).